A 217-amino-acid polypeptide reads, in one-letter code: 3,4-dihydroxy-2-butanone 4-phosphate synthase (217 aa).

D-ribulose 5-phosphate contacts are provided by residues 37–38, aspartate 42, 150–154, and glutamate 174; these read RE and RRGHT. Glutamate 38 serves as a coordination point for Mg(2+). Histidine 153 contributes to the Mg(2+) binding site.

Belongs to the DHBP synthase family. In terms of assembly, homodimer. Requires Mg(2+) as cofactor. Mn(2+) is required as a cofactor.

The catalysed reaction is D-ribulose 5-phosphate = (2S)-2-hydroxy-3-oxobutyl phosphate + formate + H(+). It participates in cofactor biosynthesis; riboflavin biosynthesis; 2-hydroxy-3-oxobutyl phosphate from D-ribulose 5-phosphate: step 1/1. Functionally, catalyzes the conversion of D-ribulose 5-phosphate to formate and 3,4-dihydroxy-2-butanone 4-phosphate. The protein is 3,4-dihydroxy-2-butanone 4-phosphate synthase of Pseudoalteromonas translucida (strain TAC 125).